The sequence spans 462 residues: MHAHAAHALGLRVPPPAFPRRRARPRRRPAAAVLATSAAPQRETDPRKRVVITGMGLASVFGSDVDTFYDRLLAGESGVGPIDRFDASSFPTRFAGQIRGFSSEGYIDGKNDRRLDDCIRYCILSGKKALESAGLGAGSDAHVKLDVGRAGVLVGTGMGGLSVFSDGVQNLIEKGYRKISPFFIPYAITNMGSALLAIDVGFMGPNYSISTACATSNYCFYAAANHIRRGEADIIVAGGTEAAIIPIGLGGFVACRALSQRNDDPITACRPWDKERDGFVMGEGAGVLVMESLEHAMKRDAPIIAEYLGGAVNCDAYHMTDPRADGLGVSSCITMSLRDAGVAPEEVNYINAHATSTLAGDLAEVRAIKQVFKNPSEIKINSTKSMIGHCLGAAGGLEAIATIKSITTGWVHPTINQFNPEPEVDFDTVANEKKQHEVNVGISNSFGFGGHNSVVVFAPFKP.

The N-terminal 35 residues, 1–35 (MHAHAAHALGLRVPPPAFPRRRARPRRRPAAAVLA), are a transit peptide targeting the chloroplast. The tract at residues 1-45 (MHAHAAHALGLRVPPPAFPRRRARPRRRPAAAVLATSAAPQRETD) is disordered. Over residues 19–29 (PRRRARPRRRP) the composition is skewed to basic residues. Residues 30–39 (AAAVLATSAA) are compositionally biased toward low complexity. The Ketosynthase family 3 (KS3) domain occupies 47–459 (RKRVVITGMG…GHNSVVVFAP (413 aa)). Catalysis depends on for beta-ketoacyl synthase activity residues cysteine 213, histidine 353, and histidine 389.

The protein belongs to the thiolase-like superfamily. Beta-ketoacyl-ACP synthases family. As to quaternary structure, homodimer.

Its subcellular location is the plastid. The protein localises to the chloroplast. It catalyses the reaction a fatty acyl-[ACP] + malonyl-[ACP] + H(+) = a 3-oxoacyl-[ACP] + holo-[ACP] + CO2. Its function is as follows. Catalyzes the condensation reaction of fatty acid synthesis by the addition to an acyl acceptor of two carbons from malonyl-ACP. Specific for elongation from C-10 to unsaturated C-16 and C-18 fatty acids. The chain is 3-oxoacyl-[acyl-carrier-protein] synthase I, chloroplastic (KAS12) from Hordeum vulgare (Barley).